Reading from the N-terminus, the 286-residue chain is Centromere protein P (286 aa).

The stretch at 1 to 73 forms a coiled coil; that stretch reads MDSETRELRA…RSEHSFLSKL (73 aa). Residue serine 38 is modified to Phosphoserine.

This sequence belongs to the CENP-P/CTF19 family. Component of the CENPA-CAD complex, composed of CENPI, CENPK, CENPL, CENPO, CENPP, CENPQ, CENPR and CENPS. The CENPA-CAD complex interacts with the CENPA-NAC complex, at least composed of CENPA, CENPC, CENPH, CENPM, CENPN, CENPT and CENPU.

The protein localises to the nucleus. Its subcellular location is the chromosome. It is found in the centromere. Functionally, component of the CENPA-CAD (nucleosome distal) complex, a complex recruited to centromeres which is involved in assembly of kinetochore proteins, mitotic progression and chromosome segregation. May be involved in incorporation of newly synthesized CENPA into centromeres via its interaction with the CENPA-NAC complex. In Mus musculus (Mouse), this protein is Centromere protein P (Cenpp).